The sequence spans 345 residues: DNA-directed RNA polymerases I and III subunit rpac1 (345 aa).

Residues 1-11 (MVNKSTTNGVS) show a composition bias toward polar residues. The interval 1–20 (MVNKSTTNGVSDPNLENKRT) is disordered.

This sequence belongs to the archaeal Rpo3/eukaryotic RPB3 RNA polymerase subunit family. Component of the RNA polymerase I (Pol I) and RNA polymerase III (Pol III) complexes consisting of at least 13 and 17 subunits, respectively. Interacts with RPAC19/RPAC2.

The protein localises to the nucleus. DNA-dependent RNA polymerase catalyzes the transcription of DNA into RNA using the four ribonucleoside triphosphates as substrates. Common component of RNA polymerases I and III which synthesize ribosomal RNA precursors and small RNAs, such as 5S rRNA and tRNAs, respectively. RPAC1 is part of the Pol core element with the central large cleft and probably a clamp element that moves to open and close the cleft. The sequence is that of DNA-directed RNA polymerases I and III subunit rpac1 (polr1c) from Dictyostelium discoideum (Social amoeba).